Here is a 186-residue protein sequence, read N- to C-terminus: dCTP deaminase (186 aa).

107-112 lines the dCTP pocket; that stretch reads KSTYAR. Glu133 (proton donor/acceptor) is an active-site residue. Residues Gln152, Tyr166, and Gln176 each contribute to the dCTP site.

This sequence belongs to the dCTP deaminase family. Homotrimer.

The enzyme catalyses dCTP + H2O + H(+) = dUTP + NH4(+). It participates in pyrimidine metabolism; dUMP biosynthesis; dUMP from dCTP (dUTP route): step 1/2. Its function is as follows. Catalyzes the deamination of dCTP to dUTP. The chain is dCTP deaminase from Campylobacter fetus subsp. fetus (strain 82-40).